Consider the following 341-residue polypeptide: Serine/threonine-protein kinase pdik1l (341 aa).

A Protein kinase domain is found at 8–332; sequence YELIQEVGRG…FELELRLVRI (325 aa). 14 to 22 lines the ATP pocket; the sequence is VGRGSYGVV. Asp-164 serves as the catalytic Proton acceptor.

It belongs to the protein kinase superfamily. Ser/Thr protein kinase family.

The protein resides in the nucleus. It catalyses the reaction L-seryl-[protein] + ATP = O-phospho-L-seryl-[protein] + ADP + H(+). The enzyme catalyses L-threonyl-[protein] + ATP = O-phospho-L-threonyl-[protein] + ADP + H(+). This is Serine/threonine-protein kinase pdik1l (pdik1l) from Danio rerio (Zebrafish).